A 518-amino-acid chain; its full sequence is MTLAEFWPLCLRRLHDMLPHGQFAQWIAPLTVGEEGGVWVVYGKNQFACNMLKSQFAGKIEAVREELAAGRPAFVFKPGEGVRYEMAAVEGAVEPAEPSLHAGSEEMPVQEVLLDELPSEKPVKPAASKTAADILAERMKNLPHEPRQAAGPASRPESAAVAKARTDAQRDAEEARYEQTNLSPDYTFDTLVEGKGNRLAAAAAQAIAENPGQSYNPFFLYGSTGLGKTHLVQAVGNELLKNRPDAKVRYMHSDDYIRSFMKAVRNNTYDVFKQQYKQYDLLIIDDIQFIKGKDRTMEEFFYLYNHFHNEKKQLILTCDVLPAKIEGMDDRLKSRFSWGLTLELEPPELEMRIAILQKKAEAAGISIEDEAALFIANLIRSNVRELEGAFNRVGASSRFMNRPVIDIDLARTALQDIIAEKHKVITADIIIDAVAKYYRIKISDVLGKKRTRNIARPRQVAMSLTKELTTLSLPSIGDSFGGRDHTTVMHGIRAVAKLREEDPELAQDYEKLLILIQN.

Residues 1-73 (MTLAEFWPLC…REELAAGRPA (73 aa)) are domain I, interacts with DnaA modulators. Positions 73–180 (AFVFKPGEGV…DAEEARYEQT (108 aa)) are domain II. The interval 144-180 (HEPRQAAGPASRPESAAVAKARTDAQRDAEEARYEQT) is disordered. Over residues 164–177 (ARTDAQRDAEEARY) the composition is skewed to basic and acidic residues. The domain III, AAA+ region stretch occupies residues 181–397 (NLSPDYTFDT…GAFNRVGASS (217 aa)). Residues glycine 225, glycine 227, lysine 228, and threonine 229 each coordinate ATP. Positions 398 to 518 (RFMNRPVIDI…YEKLLILIQN (121 aa)) are domain IV, binds dsDNA.

Belongs to the DnaA family. In terms of assembly, oligomerizes as a right-handed, spiral filament on DNA at oriC.

The protein localises to the cytoplasm. Its function is as follows. Plays an essential role in the initiation and regulation of chromosomal replication. ATP-DnaA binds to the origin of replication (oriC) to initiate formation of the DNA replication initiation complex once per cell cycle. Binds the DnaA box (a 9 base pair repeat at the origin) and separates the double-stranded (ds)DNA. Forms a right-handed helical filament on oriC DNA; dsDNA binds to the exterior of the filament while single-stranded (ss)DNA is stabiized in the filament's interior. The ATP-DnaA-oriC complex binds and stabilizes one strand of the AT-rich DNA unwinding element (DUE), permitting loading of DNA polymerase. After initiation quickly degrades to an ADP-DnaA complex that is not apt for DNA replication. Binds acidic phospholipids. The protein is Chromosomal replication initiator protein DnaA of Neisseria gonorrhoeae (strain ATCC 700825 / FA 1090).